The following is a 215-amino-acid chain: Nitrate/nitrite response regulator protein NarP (215 aa).

The region spanning 8–124 (QVMIVDDHPL…VLLEAIRAGA (117 aa)) is the Response regulatory domain. At aspartate 59 the chain carries 4-aspartylphosphate. One can recognise an HTH luxR-type domain in the interval 147-212 (EEDPFSVLTE…AATILFLQQR (66 aa)). A DNA-binding region (H-T-H motif) is located at residues 171 to 190 (NKQIASVLNISEQTVKVHIR).

Its function is as follows. This protein activates the expression of the nitrate reductase (narGHJI) and formate dehydrogenase-N (fdnGHI) operons and represses the transcription of the fumarate reductase (frdABCD) operon in response to a nitrate/nitrite induction signal transmitted by either the NarX or NarQ proteins. This chain is Nitrate/nitrite response regulator protein NarP (narP), found in Escherichia coli (strain K12).